A 122-amino-acid chain; its full sequence is Large ribosomal subunit protein uL14c (122 aa).

The protein belongs to the universal ribosomal protein uL14 family. Part of the 50S ribosomal subunit.

It is found in the plastid. The protein localises to the chloroplast. Functionally, binds to 23S rRNA. This Cucumis sativus (Cucumber) protein is Large ribosomal subunit protein uL14c.